A 387-amino-acid polypeptide reads, in one-letter code: S-adenosylmethionine synthase (387 aa).

His-19 provides a ligand contact to ATP. Mg(2+) is bound at residue Asp-21. Position 47 (Glu-47) interacts with K(+). Residue Gln-103 coordinates L-methionine. The segment at 103-113 is flexible loop; sequence QSPDIAQGVEL. Residues 167-169, 233-234, Asp-242, 248-249, Ala-265, and Lys-269 contribute to the ATP site; these read DMK, RF, and RK. Asp-242 lines the L-methionine pocket. An L-methionine-binding site is contributed by Lys-273.

Belongs to the AdoMet synthase family. In terms of assembly, homotetramer; dimer of dimers. Mg(2+) is required as a cofactor. It depends on K(+) as a cofactor.

Its subcellular location is the cytoplasm. It carries out the reaction L-methionine + ATP + H2O = S-adenosyl-L-methionine + phosphate + diphosphate. It functions in the pathway amino-acid biosynthesis; S-adenosyl-L-methionine biosynthesis; S-adenosyl-L-methionine from L-methionine: step 1/1. Functionally, catalyzes the formation of S-adenosylmethionine (AdoMet) from methionine and ATP. The overall synthetic reaction is composed of two sequential steps, AdoMet formation and the subsequent tripolyphosphate hydrolysis which occurs prior to release of AdoMet from the enzyme. The polypeptide is S-adenosylmethionine synthase (Mycoplasma capricolum subsp. capricolum (strain California kid / ATCC 27343 / NCTC 10154)).